The primary structure comprises 207 residues: Guanylate kinase (207 aa).

The 180-residue stretch at Gly5–Arg184 folds into the Guanylate kinase-like domain. Ala12 to Ser19 contacts ATP.

It belongs to the guanylate kinase family.

The protein localises to the cytoplasm. It catalyses the reaction GMP + ATP = GDP + ADP. Functionally, essential for recycling GMP and indirectly, cGMP. The chain is Guanylate kinase from Shewanella sp. (strain MR-7).